The primary structure comprises 61 residues: Large ribosomal subunit protein uL30 (61 aa).

Belongs to the universal ribosomal protein uL30 family. Part of the 50S ribosomal subunit.

This chain is Large ribosomal subunit protein uL30, found in Jannaschia sp. (strain CCS1).